The primary structure comprises 418 residues: Glutamyl-tRNA reductase (418 aa).

Residues 49–52 (TCNR), serine 109, 114–116 (EPQ), and glutamine 120 each bind substrate. Cysteine 50 acts as the Nucleophile in catalysis. NADP(+) is bound at residue 189-194 (GAGETI).

This sequence belongs to the glutamyl-tRNA reductase family. Homodimer.

It carries out the reaction (S)-4-amino-5-oxopentanoate + tRNA(Glu) + NADP(+) = L-glutamyl-tRNA(Glu) + NADPH + H(+). It participates in porphyrin-containing compound metabolism; protoporphyrin-IX biosynthesis; 5-aminolevulinate from L-glutamyl-tRNA(Glu): step 1/2. In terms of biological role, catalyzes the NADPH-dependent reduction of glutamyl-tRNA(Glu) to glutamate 1-semialdehyde (GSA). This is Glutamyl-tRNA reductase from Erwinia tasmaniensis (strain DSM 17950 / CFBP 7177 / CIP 109463 / NCPPB 4357 / Et1/99).